Reading from the N-terminus, the 542-residue chain is CTP synthase (542 aa).

Residues 1-265 (MTRYIFVTGG…DDFVVERFGL (265 aa)) are amidoligase domain. Serine 13 serves as a coordination point for CTP. Residue serine 13 participates in UTP binding. ATP is bound by residues 14–19 (SLGKGI) and aspartate 71. Residues aspartate 71 and glutamate 139 each contribute to the Mg(2+) site. CTP contacts are provided by residues 146-148 (DIE), 186-191 (KTKPTQ), and lysine 222. UTP-binding positions include 186–191 (KTKPTQ) and lysine 222. Residues 290 to 541 (TIAMVGKYME…VKAALAQKNK (252 aa)) enclose the Glutamine amidotransferase type-1 domain. An L-glutamine-binding site is contributed by glycine 351. Cysteine 378 serves as the catalytic Nucleophile; for glutamine hydrolysis. L-glutamine contacts are provided by residues 379–382 (LGMQ), glutamate 402, and arginine 469. Catalysis depends on residues histidine 514 and glutamate 516.

This sequence belongs to the CTP synthase family. As to quaternary structure, homotetramer.

It catalyses the reaction UTP + L-glutamine + ATP + H2O = CTP + L-glutamate + ADP + phosphate + 2 H(+). The enzyme catalyses L-glutamine + H2O = L-glutamate + NH4(+). It carries out the reaction UTP + NH4(+) + ATP = CTP + ADP + phosphate + 2 H(+). It participates in pyrimidine metabolism; CTP biosynthesis via de novo pathway; CTP from UDP: step 2/2. Allosterically activated by GTP, when glutamine is the substrate; GTP has no effect on the reaction when ammonia is the substrate. The allosteric effector GTP functions by stabilizing the protein conformation that binds the tetrahedral intermediate(s) formed during glutamine hydrolysis. Inhibited by the product CTP, via allosteric rather than competitive inhibition. In terms of biological role, catalyzes the ATP-dependent amination of UTP to CTP with either L-glutamine or ammonia as the source of nitrogen. Regulates intracellular CTP levels through interactions with the four ribonucleotide triphosphates. The polypeptide is CTP synthase (Pseudomonas putida (strain W619)).